A 242-amino-acid chain; its full sequence is ATP synthase subunit a (242 aa).

The next 5 membrane-spanning stretches (helical) occupy residues 21 to 41 (LASV…AIVC), 83 to 103 (AVTL…FAIV), 118 to 137 (ATVT…YYGI), 175 to 195 (LYGN…LFFE), and 198 to 218 (AWGW…SIFV).

It belongs to the ATPase A chain family. F-type ATPases have 2 components, CF(1) - the catalytic core - and CF(0) - the membrane proton channel. CF(1) has five subunits: alpha(3), beta(3), gamma(1), delta(1), epsilon(1). CF(0) has three main subunits: a(1), b(2) and c(9-12). The alpha and beta chains form an alternating ring which encloses part of the gamma chain. CF(1) is attached to CF(0) by a central stalk formed by the gamma and epsilon chains, while a peripheral stalk is formed by the delta and b chains.

The protein resides in the cell membrane. In terms of biological role, key component of the proton channel; it plays a direct role in the translocation of protons across the membrane. The chain is ATP synthase subunit a from Staphylococcus epidermidis (strain ATCC 35984 / DSM 28319 / BCRC 17069 / CCUG 31568 / BM 3577 / RP62A).